Reading from the N-terminus, the 513-residue chain is GMP synthase [glutamine-hydrolyzing] (513 aa).

Residues 9–198 form the Glutamine amidotransferase type-1 domain; the sequence is LILVLDFGSQ…VRRVCECKGQ (190 aa). The Nucleophile role is filled by cysteine 86. Catalysis depends on residues histidine 172 and glutamate 174. Positions 199–388 constitute a GMPS ATP-PPase domain; that stretch reads WTMENFIEIE…LGIPEHLVWR (190 aa). 226 to 232 contacts ATP; that stretch reads SGGVDSS.

In terms of assembly, homodimer.

It carries out the reaction XMP + L-glutamine + ATP + H2O = GMP + L-glutamate + AMP + diphosphate + 2 H(+). It participates in purine metabolism; GMP biosynthesis; GMP from XMP (L-Gln route): step 1/1. Its function is as follows. Catalyzes the synthesis of GMP from XMP. This Staphylococcus aureus (strain MSSA476) protein is GMP synthase [glutamine-hydrolyzing].